We begin with the raw amino-acid sequence, 244 residues long: NAD-dependent protein deacetylase (244 aa).

In terms of domain architecture, Deacetylase sirtuin-type spans 1 to 244 (MTGEQLAHWI…LSAVQRAVMP (244 aa)). Residues alanine 22, threonine 26, phenylalanine 33, arginine 34, glutamine 103, isoleucine 105, aspartate 106, and histidine 121 each coordinate NAD(+). Phenylalanine 33 is a binding site for nicotinamide. Nicotinamide is bound by residues isoleucine 105 and aspartate 106. The active-site Proton acceptor is histidine 121. The Zn(2+) site is built by cysteine 129, cysteine 132, cysteine 150, and cysteine 152. 4 residues coordinate NAD(+): threonine 190, serine 191, asparagine 213, and leucine 231.

It belongs to the sirtuin family. Class U subfamily. Zn(2+) serves as cofactor.

Its subcellular location is the cytoplasm. The enzyme catalyses N(6)-acetyl-L-lysyl-[protein] + NAD(+) + H2O = 2''-O-acetyl-ADP-D-ribose + nicotinamide + L-lysyl-[protein]. Functionally, NAD-dependent protein deacetylase which modulates the activities of several enzymes which are inactive in their acetylated form. The polypeptide is NAD-dependent protein deacetylase (Cutibacterium acnes (strain DSM 16379 / KPA171202) (Propionibacterium acnes)).